We begin with the raw amino-acid sequence, 264 residues long: 3-methyl-2-oxobutanoate hydroxymethyltransferase (264 aa).

2 residues coordinate Mg(2+): Asp-45 and Asp-84. 3-methyl-2-oxobutanoate contacts are provided by residues 45–46 (DS), Asp-84, and Lys-112. Glu-114 provides a ligand contact to Mg(2+). The active-site Proton acceptor is Glu-181.

This sequence belongs to the PanB family. In terms of assembly, homodecamer; pentamer of dimers. It depends on Mg(2+) as a cofactor.

The protein localises to the cytoplasm. The catalysed reaction is 3-methyl-2-oxobutanoate + (6R)-5,10-methylene-5,6,7,8-tetrahydrofolate + H2O = 2-dehydropantoate + (6S)-5,6,7,8-tetrahydrofolate. It functions in the pathway cofactor biosynthesis; (R)-pantothenate biosynthesis; (R)-pantoate from 3-methyl-2-oxobutanoate: step 1/2. Functionally, catalyzes the reversible reaction in which hydroxymethyl group from 5,10-methylenetetrahydrofolate is transferred onto alpha-ketoisovalerate to form ketopantoate. This is 3-methyl-2-oxobutanoate hydroxymethyltransferase from Vibrio atlanticus (strain LGP32) (Vibrio splendidus (strain Mel32)).